A 109-amino-acid chain; its full sequence is N-cym protein (109 aa).

As to quaternary structure, interacts with MYCN and GSK3B. As to expression, expressed in the neuronal cells of the cerebrum and cerebellum, spermatocytes of the testis, pancreatic cells and also the heart. Expressed in both primary and metastatic neuroblastomas and in thyroid tumors (at protein level). Expression is associated with poor prognosis in neuroblastoma. Expressed in the fetal brain, lung, liver and kidney at varying low levels.

The protein localises to the cytoplasm. Its subcellular location is the nucleus. Its function is as follows. Regulates stability of MYCN in neuroblastoma cells by inhibiting GSK3B-mediated MYCN phosphorylation. Inhibits GSK3B activity by promoting its phosphorylation at 'Ser-9'. The sequence is that of N-cym protein (MYCNOS) from Homo sapiens (Human).